Reading from the N-terminus, the 95-residue chain is UPF0125 protein BUsg_244 (95 aa).

Belongs to the UPF0125 (RnfH) family.

The sequence is that of UPF0125 protein BUsg_244 from Buchnera aphidicola subsp. Schizaphis graminum (strain Sg).